We begin with the raw amino-acid sequence, 219 residues long: Cytidylate kinase (219 aa).

11–19 (GTAGSGKTA) is an ATP binding site.

It belongs to the cytidylate kinase family. Type 1 subfamily.

Its subcellular location is the cytoplasm. It catalyses the reaction CMP + ATP = CDP + ADP. It carries out the reaction dCMP + ATP = dCDP + ADP. The chain is Cytidylate kinase from Mesoplasma florum (strain ATCC 33453 / NBRC 100688 / NCTC 11704 / L1) (Acholeplasma florum).